Consider the following 556-residue polypeptide: Guanine nucleotide-binding protein-like 3 homolog (556 aa).

The interval 29–50 is disordered; sequence NRKVKKEAKKNGTTNKKEKTIS. Residues 58–95 are a coiled coil; that stretch reads KEEILVQAEQEREKIKVRQEAAKEAAKIHRIEKRKNNL. Residues 138–317 enclose the CP-type G domain; that stretch reads ASEVRKTVEI…LIDSPGVILV (180 aa). GTP-binding positions include 184–187, 266–273, and 310–313; these read NKID, GFPNVGKS, and DSPG. Disordered stretches follow at residues 461–508 and 525–556; these read APHN…PESL and KKQKKKSKKTANRADKLSDSLGNMLGGDAMEM. Acidic residues predominate over residues 466–478; the sequence is DEEEDDDDEMETD. Basic residues predominate over residues 525 to 535; sequence KKQKKKSKKTA.

The protein belongs to the TRAFAC class YlqF/YawG GTPase family.

It is found in the nucleus. Functionally, may play a role in regulating cellular proliferation in both germline and somatic tissues. In Caenorhabditis elegans, this protein is Guanine nucleotide-binding protein-like 3 homolog.